A 392-amino-acid polypeptide reads, in one-letter code: ESX-1 secretion-associated protein EspA (392 aa).

The segment at 302–392 (TRQALRPRAD…GQKVLVRNVV (91 aa)) is disordered. The segment covering 334-344 (QGMGGPVGMGG) has biased composition (gly residues).

In terms of assembly, homodimer; disulfide-linked. An artificial EsxB-EsxA heterodimer interacts with EspA.

The protein resides in the secreted. Its function is as follows. Required for secretion of EsxA (ESAT-6) and EsxB (CFP-10) and for virulence. Involved in translocation of bacteria from the host (human) phagolysosome to the host cytoplasm. The sequence is that of ESX-1 secretion-associated protein EspA from Mycobacterium tuberculosis (strain ATCC 25618 / H37Rv).